A 240-amino-acid chain; its full sequence is Glyceraldehyde 3-phosphate phosphatase (240 aa).

This sequence belongs to the HAD-like hydrolase superfamily. Requires Mg(2+) as cofactor.

Functionally, catalyzes the dephosphorylation of D,L-glyceraldehyde 3-phosphate in vitro. This is Glyceraldehyde 3-phosphate phosphatase from Pyrococcus furiosus (strain ATCC 43587 / DSM 3638 / JCM 8422 / Vc1).